A 604-amino-acid chain; its full sequence is Arginine--tRNA ligase (604 aa).

Positions proline 142–histidine 152 match the 'HIGH' region motif.

Belongs to the class-I aminoacyl-tRNA synthetase family. In terms of assembly, monomer.

It localises to the cytoplasm. It carries out the reaction tRNA(Arg) + L-arginine + ATP = L-arginyl-tRNA(Arg) + AMP + diphosphate. This Prochlorococcus marinus (strain MIT 9312) protein is Arginine--tRNA ligase.